Consider the following 372-residue polypeptide: Adaptive-response sensory kinase SasA (372 aa).

The region spanning 147 to 360 is the Histidine kinase domain; sequence MVAHELRTPL…CFHFTVPVWQ (214 aa). H150 carries the phosphohistidine; by autocatalysis modification.

As to quaternary structure, homooligomerizes. Interacts with KaiC. Participates in the KaiBC complex, whose core is composed of a KaiC homohexamer and 6 KaiB.

It carries out the reaction ATP + protein L-histidine = ADP + protein N-phospho-L-histidine.. In terms of biological role, member of the two-component regulatory system SasA/RpaA involved in genome-wide circadian gene expression. One of several clock output pathways. Participates in the Kai clock protein complex, the main circadian regulator in cyanobacteria, via its interaction with KaiC. KaiC enhances the autophosphorylation activity of SasA, which then transfers its phosphate group to RpaA to activate it. In addition to its output function, recruits fold-shifted KaiB (KaiB(fs)) to KaiC to cooperatively form the KaiB(6):KaiC(6) complex (independent of SasA kinase activity). Required for robustness of the circadian rhythm of gene expression and is involved in clock output, also required for adaptation to light/dark cycles. The protein is Adaptive-response sensory kinase SasA of Prochlorococcus marinus (strain MIT 9301).